Reading from the N-terminus, the 303-residue chain is MNQIDITASEEQKSERIDKFLASTENDWSRTQVQQWVKDGQVVVNGSAVKANYKIQPGDQVTVTVPEPEALDVLAEPMDLDIYYEDQDVLVVNKPRGMVVHPAPGHLTGTLVNGLMAHCTDLSGINGVMRPGIVHRIDKDTSGLLMVAKNDMAHESLVNQLVNKTVTRKYTAVVHGLISHDDGTIDAPIGRDKKDRQSMTVTRDGKNAVTHFHVLERFQDFTLVECQLETGRTHQIRVHMKYIGFPLAGDPKYGPRKTIDFNGQALHAGVLGFDHPRTGEYVEFEAPLPEDMAELIENLRKNG.

An S4 RNA-binding domain is found at 15–74 (ERIDKFLASTENDWSRTQVQQWVKDGQVVVNGSAVKANYKIQPGDQVTVTVPEPEALDVL). Residue D138 is part of the active site.

It belongs to the pseudouridine synthase RluA family.

It carries out the reaction a uridine in RNA = a pseudouridine in RNA. This is an uncharacterized protein from Bacillus subtilis (strain 168).